Consider the following 446-residue polypeptide: Na(+)-translocating NADH-quinone reductase subunit A (446 aa).

The protein belongs to the NqrA family. In terms of assembly, composed of six subunits; NqrA, NqrB, NqrC, NqrD, NqrE and NqrF.

The catalysed reaction is a ubiquinone + n Na(+)(in) + NADH + H(+) = a ubiquinol + n Na(+)(out) + NAD(+). Functionally, NQR complex catalyzes the reduction of ubiquinone-1 to ubiquinol by two successive reactions, coupled with the transport of Na(+) ions from the cytoplasm to the periplasm. NqrA to NqrE are probably involved in the second step, the conversion of ubisemiquinone to ubiquinol. This Histophilus somni (strain 129Pt) (Haemophilus somnus) protein is Na(+)-translocating NADH-quinone reductase subunit A.